Consider the following 546-residue polypeptide: MSQVQSPLTATNSGLAVNNNTMNSQMPNRSNVRLVNGTLPPSLHVSSNLNHNTGNSSASYSGSQSRDDSTIVGLHYKIGKKIGEGSFGVLFEGTNMINGLPVAIKFEPRKTEAPQLKDEYRTYKILAGTPGIPQEYYFGQEGLHNILVIDLLGPSLEDLFDWCGRRFSVKTVVQVAVQMITLIEDLHAHDLIYRDIKPDNFLIGRPGQPDANKVHLIDFGMAKQYRDPKTKQHIPYREKKSLSGTARYMSINTHLGREQSRRDDMEAMGHVFFYFLRGQLPWQGLKAPNNKQKYEKIGEKKRLTNVYDLAQGLPIQFGRYLEIVRNLSFEETPDYEGYRMLLLSVLDDLGETADGQYDWMKLNGGRGWDLSINKKPNLHGYGHPNPPNEKSKRHRSKNHQYSSPDHHHHYNQQQQQQQAQAQAQAQAQAKVQQQQLQQAQAQQQANRYQLQPDDSHYDEEREASKLDPTSYEAYQQQTQQKYAQQQQKQMQQKSKQFANTGANGQTNKYPYNAQPTANDEQNAKNAAQDRNSNKSSKGFFSKLGCC.

Composition is skewed to polar residues over residues 1-33 and 44-55; these read MSQV…SNVR and HVSSNLNHNTGN. Residues 1–67 are disordered; it reads MSQVQSPLTA…ASYSGSQSRD (67 aa). Residue Ser-2 is modified to N-acetylserine. Residues 76 to 360 enclose the Protein kinase domain; sequence YKIGKKIGEG…ETADGQYDWM (285 aa). ATP contacts are provided by residues 82-90 and Lys-105; that span reads IGEGSFGVL. Catalysis depends on Asp-195, which acts as the Proton acceptor. Disordered regions lie at residues 373–425 and 443–546; these read NKKP…QAQA and QQAN…LGCC. Positions 412–425 are enriched in low complexity; that stretch reads QQQQQQQAQAQAQA. The span at 453–465 shows a compositional bias: basic and acidic residues; it reads DDSHYDEEREASK. The residue at position 455 (Ser-455) is a Phosphoserine. Lys-465 participates in a covalent cross-link: Glycyl lysine isopeptide (Lys-Gly) (interchain with G-Cter in ubiquitin). Low complexity predominate over residues 475 to 496; sequence QQQTQQKYAQQQQKQMQQKSKQ. Polar residues predominate over residues 497–530; it reads FANTGANGQTNKYPYNAQPTANDEQNAKNAAQDR. Positions 533–546 are enriched in low complexity; sequence NKSSKGFFSKLGCC. 2 S-palmitoyl cysteine lipidation sites follow: Cys-545 and Cys-546.

Belongs to the protein kinase superfamily. CK1 Ser/Thr protein kinase family. Casein kinase I subfamily. Palmitoylated by AKR1, which is required for proper plasma membrane localization of YCK2.

Its subcellular location is the cell membrane. It carries out the reaction L-seryl-[protein] + ATP = O-phospho-L-seryl-[protein] + ADP + H(+). It catalyses the reaction L-threonyl-[protein] + ATP = O-phospho-L-threonyl-[protein] + ADP + H(+). In terms of biological role, casein kinases are operationally defined by their preferential utilization of acidic proteins such as caseins as substrates. In Saccharomyces cerevisiae (strain ATCC 204508 / S288c) (Baker's yeast), this protein is Casein kinase I homolog 2 (YCK2).